A 145-amino-acid chain; its full sequence is Bacilliredoxin BH2759 (145 aa).

Belongs to the bacilliredoxin family.

This chain is Bacilliredoxin BH2759, found in Halalkalibacterium halodurans (strain ATCC BAA-125 / DSM 18197 / FERM 7344 / JCM 9153 / C-125) (Bacillus halodurans).